The primary structure comprises 112 residues: Nitrogen regulatory protein GlnK1 (112 aa).

Thr-29 is a binding site for ADP. ATP contacts are provided by Thr-29 and Val-38. 52–54 lines the 2-oxoglutarate pocket; it reads IVD. Residues Val-64, 88 to 90, and 101 to 103 contribute to the ADP site; these read DGK and RVR. Residues Val-64, 86–90, and 101–103 contribute to the ATP site; these read PGDGK and RVR.

The protein belongs to the P(II) protein family. Homotrimer. Interacts and forms a complex with Amt1.

It is found in the cytoplasm. With respect to regulation, formation of the GlnK1/Amt1 complex is decreased in the presence of Mg-ATP or 2-oxoglutarate. The presence of both effectors abolishes the formation of the complex. Functionally, involved in the regulation of nitrogen metabolism. Regulates the activity of its targets by protein-protein interaction in response to the nitrogen status of the cell. Regulates the activity of the ammonia channel Amt1 via direct interaction. The sequence is that of Nitrogen regulatory protein GlnK1 from Methanocaldococcus jannaschii (strain ATCC 43067 / DSM 2661 / JAL-1 / JCM 10045 / NBRC 100440) (Methanococcus jannaschii).